The sequence spans 330 residues: DNA primase small subunit PriS (330 aa).

Active-site residues include aspartate 101 and aspartate 103. The Zn(2+) site is built by cysteine 116, cysteine 119, cysteine 128, and aspartate 131. Residue aspartate 235 is part of the active site.

It belongs to the eukaryotic-type primase small subunit family. Heterodimer of a small subunit (PriS) and a large subunit (PriL). Mg(2+) serves as cofactor. The cofactor is Mn(2+).

Its function is as follows. Catalytic subunit of DNA primase, an RNA polymerase that catalyzes the synthesis of short RNA molecules used as primers for DNA polymerase during DNA replication. The small subunit contains the primase catalytic core and has DNA synthesis activity on its own. Binding to the large subunit stabilizes and modulates the activity, increasing the rate of DNA synthesis while decreasing the length of the DNA fragments, and conferring RNA synthesis capability. The DNA polymerase activity may enable DNA primase to also catalyze primer extension after primer synthesis. May also play a role in DNA repair. The polypeptide is DNA primase small subunit PriS (Saccharolobus islandicus (strain M.16.27) (Sulfolobus islandicus)).